Here is a 330-residue protein sequence, read N- to C-terminus: 2-methoxy-6-polyprenyl-1,4-benzoquinol methylase, mitochondrial (330 aa).

The transit peptide at 1 to 42 (MAAPRSWALWSFCGCGWSRAVSGCRLPGLRSSSPRGPLGARL) directs the protein to the mitochondrion. Residues threonine 117, aspartate 171, and 199–200 (DA) contribute to the S-adenosyl-L-methionine site.

Belongs to the class I-like SAM-binding methyltransferase superfamily. MenG/UbiE family. As to quaternary structure, component of a multi-subunit COQ enzyme complex, composed of at least COQ3, COQ4, COQ5, COQ6, COQ7 and COQ9. Interacts with PYURF; the interaction is direct, stabilizes COQ5 protein and associates PYURF with COQ enzyme complex.

It is found in the mitochondrion inner membrane. The catalysed reaction is 2-methoxy-6-(all-trans-decaprenyl)benzene-1,4-diol + S-adenosyl-L-methionine = 5-methoxy-2-methyl-3-(all-trans-decaprenyl)benzene-1,4-diol + S-adenosyl-L-homocysteine + H(+). It participates in cofactor biosynthesis; ubiquinone biosynthesis. Its function is as follows. Methyltransferase required for the conversion of 2-decaprenyl-6-methoxy-1,4-benzoquinol (DDMQH2) to 2-decaprenyl-3-methyl-6-methoxy-1,4-benzoquinol (DMQH2). This Bos taurus (Bovine) protein is 2-methoxy-6-polyprenyl-1,4-benzoquinol methylase, mitochondrial.